Consider the following 755-residue polypeptide: Polyribonucleotide nucleotidyltransferase (755 aa).

The Mg(2+) site is built by D527 and D533. Residues P593 to I652 form the KH domain. An S1 motif domain is found at G664–V733. The disordered stretch occupies residues G734–Q755. Residues E740–Q755 are compositionally biased toward low complexity.

It belongs to the polyribonucleotide nucleotidyltransferase family. The cofactor is Mg(2+).

Its subcellular location is the cytoplasm. The catalysed reaction is RNA(n+1) + phosphate = RNA(n) + a ribonucleoside 5'-diphosphate. In terms of biological role, involved in mRNA degradation. Catalyzes the phosphorolysis of single-stranded polyribonucleotides processively in the 3'- to 5'-direction. In Mycobacteroides abscessus (strain ATCC 19977 / DSM 44196 / CCUG 20993 / CIP 104536 / JCM 13569 / NCTC 13031 / TMC 1543 / L948) (Mycobacterium abscessus), this protein is Polyribonucleotide nucleotidyltransferase.